The chain runs to 310 residues: tRNA uridine(34) hydroxylase (310 aa).

The Rhodanese domain maps to 124 to 218 (SDPEVLLIDT…YFEEVAQEES (95 aa)). Cysteine 178 serves as the catalytic Cysteine persulfide intermediate.

This sequence belongs to the TrhO family.

The catalysed reaction is uridine(34) in tRNA + AH2 + O2 = 5-hydroxyuridine(34) in tRNA + A + H2O. Catalyzes oxygen-dependent 5-hydroxyuridine (ho5U) modification at position 34 in tRNAs. The polypeptide is tRNA uridine(34) hydroxylase (Pseudomonas entomophila (strain L48)).